The sequence spans 594 residues: APOBEC1 complementation factor (594 aa).

RRM domains are found at residues 56–134, 136–218, and 231–303; these read CEIF…ASVD, CRLF…WAEP, and KILY…LAKP. The required for nuclear localization stretch occupies residues 359-408; it reads HFPATKGHLSNRALIRTPSVREIYMNVPVGAAGVRGLGGRGYLAYTGLGR. Thr-498 is modified (phosphothreonine).

As to quaternary structure, part of the apolipoprotein B mRNA editing complex with APOBEC1. Interacts with TNPO2; TNPO2 may be responsible for transport of A1CF into the nucleus. Interacts with SYNCRIP. Interacts with CELF2/CUGBP2. Interacts with RBM47. Isoforms 1 and 2 are widely expressed while isoforms 3 and 4 are restricted to liver and small intestine.

The protein localises to the nucleus. The protein resides in the endoplasmic reticulum. It is found in the cytoplasm. Essential component of the apolipoprotein B mRNA editing enzyme complex which is responsible for the postranscriptional editing of a CAA codon for Gln to a UAA codon for stop in APOB mRNA. Binds to APOB mRNA and is probably responsible for docking the catalytic subunit, APOBEC1, to the mRNA to allow it to deaminate its target cytosine. The complex also seems to protect the edited APOB mRNA from nonsense-mediated decay. The chain is APOBEC1 complementation factor (A1cf) from Rattus norvegicus (Rat).